Reading from the N-terminus, the 406-residue chain is Bifunctional enzyme IspD/IspF (406 aa).

The tract at residues 1–246 (MTQMHSTQPM…KLSAGLLPDV (246 aa)) is 2-C-methyl-D-erythritol 4-phosphate cytidylyltransferase. The 2-C-methyl-D-erythritol 2,4-cyclodiphosphate synthase stretch occupies residues 247 to 406 (RTGNGYDVHQ…ATVVYRGGRP (160 aa)). A divalent metal cation contacts are provided by D253 and H255. 4-CDP-2-C-methyl-D-erythritol 2-phosphate is bound by residues 253–255 (DVH) and 279–280 (HS). H287 provides a ligand contact to a divalent metal cation. Residues 301 to 303 (DIG), 377 to 380 (TTNE), F384, and R387 each bind 4-CDP-2-C-methyl-D-erythritol 2-phosphate.

The protein in the N-terminal section; belongs to the IspD/TarI cytidylyltransferase family. IspD subfamily. This sequence in the C-terminal section; belongs to the IspF family. It depends on a divalent metal cation as a cofactor.

The catalysed reaction is 2-C-methyl-D-erythritol 4-phosphate + CTP + H(+) = 4-CDP-2-C-methyl-D-erythritol + diphosphate. The enzyme catalyses 4-CDP-2-C-methyl-D-erythritol 2-phosphate = 2-C-methyl-D-erythritol 2,4-cyclic diphosphate + CMP. It functions in the pathway isoprenoid biosynthesis; isopentenyl diphosphate biosynthesis via DXP pathway; isopentenyl diphosphate from 1-deoxy-D-xylulose 5-phosphate: step 2/6. The protein operates within isoprenoid biosynthesis; isopentenyl diphosphate biosynthesis via DXP pathway; isopentenyl diphosphate from 1-deoxy-D-xylulose 5-phosphate: step 4/6. Bifunctional enzyme that catalyzes the formation of 4-diphosphocytidyl-2-C-methyl-D-erythritol from CTP and 2-C-methyl-D-erythritol 4-phosphate (MEP) (IspD), and catalyzes the conversion of 4-diphosphocytidyl-2-C-methyl-D-erythritol 2-phosphate (CDP-ME2P) to 2-C-methyl-D-erythritol 2,4-cyclodiphosphate (ME-CPP) with a corresponding release of cytidine 5-monophosphate (CMP) (IspF). This Rhizobium rhizogenes (strain K84 / ATCC BAA-868) (Agrobacterium radiobacter) protein is Bifunctional enzyme IspD/IspF.